Consider the following 356-residue polypeptide: Heat-inducible transcription repressor HrcA (356 aa).

The protein belongs to the HrcA family.

Functionally, negative regulator of class I heat shock genes (grpE-dnaK-dnaJ and groELS operons). Prevents heat-shock induction of these operons. This Gluconobacter oxydans (strain 621H) (Gluconobacter suboxydans) protein is Heat-inducible transcription repressor HrcA.